The chain runs to 241 residues: tRNA (guanine-N(7)-)-methyltransferase B (241 aa).

6 residues coordinate S-adenosyl-L-methionine: Gly-61, Glu-84, Arg-86, Asn-117, Ala-118, and Leu-137. Asp-140 is a catalytic residue. The tract at residues 141–149 (PHFKKTKHK) is alphaC helix. Residues Thr-215 and Glu-217 each contribute to the S-adenosyl-L-methionine site. The segment at 215–223 (TEEGKKVQR) is alpha6 helix.

The protein belongs to the class I-like SAM-binding methyltransferase superfamily. TrmB family. Catalytic component of the METTL1-WDR4 complex, composed of mettl1 and wdr4.

Its subcellular location is the nucleus. It carries out the reaction guanosine(46) in tRNA + S-adenosyl-L-methionine = N(7)-methylguanosine(46) in tRNA + S-adenosyl-L-homocysteine. It catalyses the reaction a guanosine in mRNA + S-adenosyl-L-methionine = an N(7)-methylguanosine in mRNA + S-adenosyl-L-homocysteine. The enzyme catalyses a guanosine in miRNA + S-adenosyl-L-methionine = an N(7)-methylguanosine in miRNA + S-adenosyl-L-homocysteine. It functions in the pathway tRNA modification; N(7)-methylguanine-tRNA biosynthesis. Catalytic component of METTL1-WDR4 methyltransferase complex that mediates the formation of N(7)-methylguanine in a subset of RNA species, such as tRNAs, mRNAs and microRNAs (miRNAs). Catalyzes the formation of N(7)-methylguanine at position 46 (m7G46) in a large subset of tRNAs that contain the 5'-RAGGU-3' motif within the variable loop. M7G46 interacts with C13-G22 in the D-loop to stabilize tRNA tertiary structure and protect tRNAs from decay. Also acts as a methyltransferase for a subset of internal N(7)-methylguanine in mRNAs. Internal N(7)-methylguanine methylation of mRNAs in response to stress promotes their relocalization to stress granules, thereby suppressing their translation. Also methylates a specific subset of miRNAs. The chain is tRNA (guanine-N(7)-)-methyltransferase B (mettl1-B) from Xenopus tropicalis (Western clawed frog).